The sequence spans 96 residues: C-C motif chemokine 20 (96 aa).

The first 26 residues, 1-26, serve as a signal peptide directing secretion; sequence MMCSSKNLLLAALMSVLLLHFCSKSE. 2 disulfide bridges follow: Cys-32-Cys-58 and Cys-33-Cys-74.

The protein belongs to the intercrine beta (chemokine CC) family.

The protein localises to the secreted. In terms of biological role, acts as a ligand for C-C chemokine receptor CCR6. Signals through binding and activation of CCR6 and induces a strong chemotactic response and mobilization of intracellular calcium ions. The ligand-receptor pair CCL20-CCR6 is responsible for the chemotaxis of dendritic cells (DC), effector/memory T-cells and B-cells and plays an important role at skin and mucosal surfaces under homeostatic and inflammatory conditions, as well as in pathology, including cancer and autoimmune diseases. CCL20 acts as a chemotactic factor that attracts lymphocytes and, slightly, neutrophils, but not monocytes. Involved in the recruitment of both the pro-inflammatory IL17 producing helper T-cells (Th17) and the regulatory T-cells (Treg) to sites of inflammation. Required for optimal migration of thymic natural regulatory T cells (nTregs) and DN1 early thymocyte progenitor cells. Positively regulates sperm motility and chemotaxis via its binding to CCR6 which triggers Ca2+ mobilization in the sperm which is important for its motility. May be involved in formation and function of the mucosal lymphoid tissues by attracting lymphocytes and dendritic cells towards epithelial cells. This chain is C-C motif chemokine 20 (CCL20), found in Bos taurus (Bovine).